A 197-amino-acid polypeptide reads, in one-letter code: Carbohydrate-binding X8 domain-containing protein (197 aa).

The signal sequence occupies residues 1–19; the sequence is MAVLLPLFLLSFMFTYSNA. The span at 101 to 113 shows a compositional bias: low complexity; sequence SCLSSSSSNGTPT. Positions 101–176 are disordered; that stretch reads SCLSSSSSNG…TSGDPNGGEE (76 aa). The segment covering 116-125 has biased composition (polar residues); sequence YPSTGNSTTA. Positions 126-145 are enriched in low complexity; that stretch reads SPGTTNPSTGNSTNSTLPTN. A compositionally biased stretch (polar residues) spans 146–155; that stretch reads DKPTSSTITF. A compositionally biased stretch (low complexity) spans 156 to 170; the sequence is PDSTTMGPSSSTSGD. The GPI-anchor amidated asparagine moiety is linked to residue Asn-172. Residues 173 to 197 constitute a propeptide, removed in mature form; the sequence is GGEELSVRTTTIILLTTIAAVALRV.

Expressed in the sieve elements.

It is found in the cell membrane. This chain is Carbohydrate-binding X8 domain-containing protein, found in Arabidopsis thaliana (Mouse-ear cress).